A 416-amino-acid chain; its full sequence is Phosphoribosylamine--glycine ligase (416 aa).

In terms of domain architecture, ATP-grasp spans 107–313 (KDFMKKYNVK…FVDLINAAMD (207 aa)). Residue 133-194 (LKKCTYPIVI…EEYLEGVEAS (62 aa)) participates in ATP binding. Mg(2+)-binding residues include E283 and N285.

It belongs to the GARS family. Mg(2+) is required as a cofactor. It depends on Mn(2+) as a cofactor.

The catalysed reaction is 5-phospho-beta-D-ribosylamine + glycine + ATP = N(1)-(5-phospho-beta-D-ribosyl)glycinamide + ADP + phosphate + H(+). Its pathway is purine metabolism; IMP biosynthesis via de novo pathway; N(1)-(5-phospho-D-ribosyl)glycinamide from 5-phospho-alpha-D-ribose 1-diphosphate: step 2/2. In Clostridium acetobutylicum (strain ATCC 824 / DSM 792 / JCM 1419 / IAM 19013 / LMG 5710 / NBRC 13948 / NRRL B-527 / VKM B-1787 / 2291 / W), this protein is Phosphoribosylamine--glycine ligase.